Consider the following 498-residue polypeptide: MASQGTKRSYEQMETGGERQNATEIRASVGRMVGGIGRFYIQMCTELKLSDYEGRLIQNSITIERMILSAFDERRNKYLEEHPSAGKDPKKTGGPIYRRRDGKWMRELILYDKEEIRRIWRQANNGEDATAGLTHLMIWHSNLNDATYQRTRALVRTGMDPRMCSLMQGSTLPRRSGAAGAAVKGVGTMVMELIRMIKRGINDRNFWRGENGRRTRIAYERMCNILKGKFQTAAQRAMMDQVRESRNPGNAEIEDLIFLARSALILRGSVAHKSCLPACVYGLAVASGYDFEREGYSLVGIDPFRLLQNSQVFSLIRPNENPAHKSQLVWMACHSAAFEDLRVSSFIRGTRVVPRGQMSTRGVQIASNENMETMDSSTLELRSRYWAIRTRSGGNTNQQRASAGQISVQPTFSVQRNLPFERATIMAAFTGNTEGRTSDMRTEIIRMMENARPEDVSFQGRGVFELSDEKATNPIVPSFDMSNEGSYFFGDNAEEYDN.

Residues 1–18 carry the Unconventional nuclear localization signal motif; sequence MASQGTKRSYEQMETGGE. The tract at residues 1–21 is disordered; the sequence is MASQGTKRSYEQMETGGERQN. The Bipartite nuclear localization signal motif lies at 198 to 216; the sequence is KRGINDRNFWRGENGRRTR.

Belongs to the influenza viruses nucleoprotein family. As to quaternary structure, homomultimerizes to form the nucleocapsid. May bind host exportin-1/XPO1. Binds to viral genomic RNA. Protein-RNA contacts are mediated by a combination of electrostatic interactions between positively charged residues and the phosphate backbone and planar interactions between aromatic side chains and bases. In terms of processing, late in virus-infected cells, may be cleaved from a 56-kDa protein to a 53-kDa protein by a cellular caspase. This cleavage might be a marker for the onset of apoptosis in infected cells or have a specific function in virus host interaction.

It is found in the virion. Its subcellular location is the host nucleus. Functionally, encapsidates the negative strand viral RNA, protecting it from nucleases. The encapsidated genomic RNA is termed the ribonucleoprotein (RNP) and serves as template for transcription and replication. The RNP needs to be localized in the host nucleus to start an infectious cycle, but is too large to diffuse through the nuclear pore complex. NP comprises at least 2 nuclear localization signals that are responsible for the active RNP import into the nucleus through cellular importin alpha/beta pathway. Later in the infection, nclear export of RNPs are mediated through viral proteins NEP interacting with M1 which binds nucleoproteins. It is possible that nucleoprotein binds directly host exportin-1/XPO1 and plays an active role in RNPs nuclear export. M1 interaction with RNP seems to hide nucleoprotein's nuclear localization signals. Soon after a virion infects a new cell, M1 dissociates from the RNP under acidification of the virion driven by M2 protein. Dissociation of M1 from RNP unmasks nucleoprotein's nuclear localization signals, targeting the RNP to the nucleus. This Anatidae (waterfowl) protein is Nucleoprotein.